The sequence spans 366 residues: Glycerol-3-phosphate dehydrogenase [NAD(+)], glycosomal (366 aa).

NAD(+) contacts are provided by residues 22 to 27 (GSGAFG), Phe-97, Lys-125, and Ala-157. Lys-125 lines the substrate pocket. The active-site Proton acceptor is Lys-210. Positions 274, 298, and 300 each coordinate NAD(+). Substrate is bound at residue 274–275 (RN). A Microbody targeting signal motif is present at residues 364 to 366 (SKL).

Belongs to the NAD-dependent glycerol-3-phosphate dehydrogenase family. Homodimer.

It is found in the glycosome. It catalyses the reaction sn-glycerol 3-phosphate + NAD(+) = dihydroxyacetone phosphate + NADH + H(+). This is Glycerol-3-phosphate dehydrogenase [NAD(+)], glycosomal (GPD) from Leishmania mexicana.